The chain runs to 104 residues: Large ribosomal subunit protein bL21 (104 aa).

Belongs to the bacterial ribosomal protein bL21 family. As to quaternary structure, part of the 50S ribosomal subunit. Contacts protein L20.

This protein binds to 23S rRNA in the presence of protein L20. The sequence is that of Large ribosomal subunit protein bL21 from Streptococcus mutans serotype c (strain ATCC 700610 / UA159).